A 425-amino-acid polypeptide reads, in one-letter code: Tol-Pal system protein TolB (425 aa).

A signal peptide spans Met1–Ala22.

Belongs to the TolB family. In terms of assembly, the Tol-Pal system is composed of five core proteins: the inner membrane proteins TolA, TolQ and TolR, the periplasmic protein TolB and the outer membrane protein Pal. They form a network linking the inner and outer membranes and the peptidoglycan layer.

The protein resides in the periplasm. In terms of biological role, part of the Tol-Pal system, which plays a role in outer membrane invagination during cell division and is important for maintaining outer membrane integrity. This chain is Tol-Pal system protein TolB, found in Nitrosomonas europaea (strain ATCC 19718 / CIP 103999 / KCTC 2705 / NBRC 14298).